The chain runs to 78 residues: Conotoxin TsMSGL-13 (78 aa).

The N-terminal stretch at 1–24 (MSGLGIMVLTLLLFMFMATSHQDA) is a signal peptide. The propeptide occupies 25-44 (GEKQATQRDAINVRRRRSIT). 3 disulfides stabilise this stretch: Cys-51/Cys-63, Cys-55/Cys-72, and Cys-62/Cys-76. Phe-77 is modified (phenylalanine amide).

Belongs to the conotoxin O3 superfamily. In terms of tissue distribution, expressed by the venom duct.

It is found in the secreted. This is Conotoxin TsMSGL-13 from Conus tessulatus (Tessellate cone).